We begin with the raw amino-acid sequence, 450 residues long: Tubulin alpha-5 chain (450 aa).

Q11, E71, G144, T145, T179, N206, and N228 together coordinate GTP. E71 is a Mg(2+) binding site. The active site involves E254. Position 349 is a phosphothreonine (T349). The interval 429-450 (EKDYEEVGAEGGDDEEDEGEDY) is disordered. The segment covering 431 to 450 (DYEEVGAEGGDDEEDEGEDY) has biased composition (acidic residues).

This sequence belongs to the tubulin family. Dimer of alpha and beta chains. A typical microtubule is a hollow water-filled tube with an outer diameter of 25 nm and an inner diameter of 15 nM. Alpha-beta heterodimers associate head-to-tail to form protofilaments running lengthwise along the microtubule wall with the beta-tubulin subunit facing the microtubule plus end conferring a structural polarity. Microtubules usually have 13 protofilaments but different protofilament numbers can be found in some organisms and specialized cells. Mg(2+) is required as a cofactor. In terms of processing, undergoes a tyrosination/detyrosination cycle, the cyclic removal and re-addition of a C-terminal tyrosine residue by the enzymes tubulin tyrosine carboxypeptidase (TTCP) and tubulin tyrosine ligase (TTL), respectively.

It localises to the cytoplasm. The protein localises to the cytoskeleton. It catalyses the reaction GTP + H2O = GDP + phosphate + H(+). Functionally, tubulin is the major constituent of microtubules, a cylinder consisting of laterally associated linear protofilaments composed of alpha- and beta-tubulin heterodimers. Microtubules grow by the addition of GTP-tubulin dimers to the microtubule end, where a stabilizing cap forms. Below the cap, tubulin dimers are in GDP-bound state, owing to GTPase activity of alpha-tubulin. The polypeptide is Tubulin alpha-5 chain (TUBA5) (Arabidopsis thaliana (Mouse-ear cress)).